The chain runs to 409 residues: MSRYVFTSESVTEGHPDKICDQVSDAVLDACLSEDPTSRVACEAVVNTGLCLITGEITSKAEVDFNKLVREVIKSIGYRSASDGGFDANSCAVLVALDQQSSDIAQGVNEAEDHSTDPLDQVGAGDQGIMFGFACDETPELMPLPISLAHRLARRLALVRHQQLIDYLLPDGKTQVSVSYENGVPCSIDTILISTQHKSEVDGITLEEEIQKRIAKDLWKFVVEPATEDLPLKPAKESTRFLVNPTGKFVIGGPQGDAGLTGRKIIVDTYGGYARHGGGAFSGKDPTKVDRSAAYAARFVAKALVAANLAKKVEVQLSYAIGVAKPISILVDSFGTGKVSDSELTQLVQDQFDLRPGAIIKAFDLQNLPSVRGGRFYRDTAAYGHFGRTDILLPWEDVSQKAKELSLLK.

ATP is bound at residue H15. D17 is a binding site for Mg(2+). E43 lines the K(+) pocket. Positions 56 and 100 each coordinate L-methionine. Residues 100-110 (QSSDIAQGVNE) are flexible loop. ATP-binding positions include 171-173 (DGK), 248-249 (KF), D257, 263-264 (RK), A280, and K284. D257 is a binding site for L-methionine. L-methionine is bound at residue K288.

Belongs to the AdoMet synthase family. In terms of assembly, homotetramer; dimer of dimers. The cofactor is Mg(2+). K(+) serves as cofactor.

Its subcellular location is the cytoplasm. It carries out the reaction L-methionine + ATP + H2O = S-adenosyl-L-methionine + phosphate + diphosphate. The protein operates within amino-acid biosynthesis; S-adenosyl-L-methionine biosynthesis; S-adenosyl-L-methionine from L-methionine: step 1/1. Catalyzes the formation of S-adenosylmethionine (AdoMet) from methionine and ATP. The overall synthetic reaction is composed of two sequential steps, AdoMet formation and the subsequent tripolyphosphate hydrolysis which occurs prior to release of AdoMet from the enzyme. The sequence is that of S-adenosylmethionine synthase from Prochlorococcus marinus (strain NATL1A).